The primary structure comprises 265 residues: Undecaprenyl-diphosphatase (265 aa).

The next 7 helical transmembrane spans lie at 42-62 (AATFEVAIQLGAILAVVVLYW), 82-102 (GIMLLLLTSLPASVLGLAAHS), 108-128 (LFTPSTVAIALAVGAIFMLLV), 143-163 (MSPALALGIGCFQCLALWPGF), 181-201 (GLAAEYSFIAAVPIMFAATGY), 221-241 (GFVVSFLSAWAAVKLFIALVG), and 248-264 (FAWYRLAIAPLVYYFMA).

This sequence belongs to the UppP family.

The protein resides in the cell inner membrane. It catalyses the reaction di-trans,octa-cis-undecaprenyl diphosphate + H2O = di-trans,octa-cis-undecaprenyl phosphate + phosphate + H(+). In terms of biological role, catalyzes the dephosphorylation of undecaprenyl diphosphate (UPP). Confers resistance to bacitracin. The chain is Undecaprenyl-diphosphatase from Nitratidesulfovibrio vulgaris (strain DP4) (Desulfovibrio vulgaris).